We begin with the raw amino-acid sequence, 449 residues long: Signal recognition particle protein (449 aa).

Residues 109-116 (GLQGSGKT), 191-195 (DTAGR), and 249-252 (SRID) contribute to the GTP site.

This sequence belongs to the GTP-binding SRP family. SRP54 subfamily. As to quaternary structure, part of the signal recognition particle protein translocation system, which is composed of SRP and FtsY. SRP is a ribonucleoprotein composed of Ffh and a 4.5S RNA molecule.

The protein resides in the cytoplasm. The catalysed reaction is GTP + H2O = GDP + phosphate + H(+). Involved in targeting and insertion of nascent membrane proteins into the cytoplasmic membrane. Binds to the hydrophobic signal sequence of the ribosome-nascent chain (RNC) as it emerges from the ribosomes. The SRP-RNC complex is then targeted to the cytoplasmic membrane where it interacts with the SRP receptor FtsY. Interaction with FtsY leads to the transfer of the RNC complex to the Sec translocase for insertion into the membrane, the hydrolysis of GTP by both Ffh and FtsY, and the dissociation of the SRP-FtsY complex into the individual components. The chain is Signal recognition particle protein from Rickettsia conorii (strain ATCC VR-613 / Malish 7).